Consider the following 504-residue polypeptide: ATP synthase subunit alpha (504 aa).

ATP is bound at residue 169–176 (GDRKTGKT).

The protein belongs to the ATPase alpha/beta chains family. F-type ATPases have 2 components, CF(1) - the catalytic core - and CF(0) - the membrane proton channel. CF(1) has five subunits: alpha(3), beta(3), gamma(1), delta(1), epsilon(1). CF(0) has three main subunits: a(1), b(2) and c(9-12). The alpha and beta chains form an alternating ring which encloses part of the gamma chain. CF(1) is attached to CF(0) by a central stalk formed by the gamma and epsilon chains, while a peripheral stalk is formed by the delta and b chains.

Its subcellular location is the cell membrane. It carries out the reaction ATP + H2O + 4 H(+)(in) = ADP + phosphate + 5 H(+)(out). In terms of biological role, produces ATP from ADP in the presence of a proton gradient across the membrane. The alpha chain is a regulatory subunit. The sequence is that of ATP synthase subunit alpha from Lactiplantibacillus plantarum (strain ATCC BAA-793 / NCIMB 8826 / WCFS1) (Lactobacillus plantarum).